Here is a 200-residue protein sequence, read N- to C-terminus: Large ribosomal subunit protein bL25 (200 aa).

The protein belongs to the bacterial ribosomal protein bL25 family. CTC subfamily. In terms of assembly, part of the 50S ribosomal subunit; part of the 5S rRNA/L5/L18/L25 subcomplex. Contacts the 5S rRNA. Binds to the 5S rRNA independently of L5 and L18.

Its function is as follows. This is one of the proteins that binds to the 5S RNA in the ribosome where it forms part of the central protuberance. In Nocardia farcinica (strain IFM 10152), this protein is Large ribosomal subunit protein bL25.